Consider the following 106-residue polypeptide: Iron-sulfur cluster assembly protein CyaY (106 aa).

It belongs to the frataxin family.

Functionally, involved in iron-sulfur (Fe-S) cluster assembly. May act as a regulator of Fe-S biogenesis. This Pectobacterium atrosepticum (strain SCRI 1043 / ATCC BAA-672) (Erwinia carotovora subsp. atroseptica) protein is Iron-sulfur cluster assembly protein CyaY.